The following is a 93-amino-acid chain: LGTDIISPPVCGNELLEVGEECDCGTPENCQNECCDAATCKLKSGSECGHGDCCEQCKFTKSGTECRASMSECDPAEHCTGQSSECPADVGHK.

In terms of domain architecture, Disintegrin spans 8-93 (PPVCGNELLE…SECPADVGHK (86 aa)). Ca(2+) is bound by residues valine 10, asparagine 13, leucine 15, glutamate 17, glutamate 20, and aspartate 23. Cystine bridges form between cysteine 11/cysteine 40, cysteine 22/cysteine 35, cysteine 24/cysteine 30, cysteine 34/cysteine 57, cysteine 48/cysteine 54, cysteine 53/cysteine 79, and cysteine 66/cysteine 86. A D/ECD-tripeptide motif is present at residues 72 to 74 (ECD). Ca(2+) contacts are provided by aspartate 74, proline 75, glutamate 77, aspartate 89, and valine 90. The interval 74 to 93 (DPAEHCTGQSSECPADVGHK) is disordered.

This sequence belongs to the venom metalloproteinase (M12B) family. P-III subfamily. In terms of assembly, monomer. Zn(2+) serves as cofactor. N-glycosylated. In terms of tissue distribution, expressed by the venom gland.

Its subcellular location is the secreted. Functionally, snake venom zinc metalloprotease that possesses hemorrhagic activity. The disintegrin-like domain has been expressed and named leucurogin. This recombinant disintegrin is able to inhibit collagen-induced platelet aggregation but not ADP- or arachidonic acid-induced platelet aggregation. Furthermore, it inhibits the adhesion of human fibroblasts to collagen type I. It also reduces adhesion and migration of human fibroblasts and inhibits migration and proliferation of human and mouse melanoma cell lines (BLM, and B16-F10-Nex2). In vitro, it inhibits the vascular structures formation by endothelial cells. In addition, it inhibits the growth of experimental Ehrlich tumor and has anti-angiogenesis effect on the sponge implant model. In vivo, when intraperitoneally injected into mice, it inhibits lung metastasis of B16F10 Nex-2 cells. In the treatment of human melanoma, grafted intradermally in the nude mice flank, it inhibits tumor growth. The protein is Zinc metalloproteinase-disintegrin-like leucurogin of Bothrops leucurus (Whitetail lancehead).